The sequence spans 117 residues: MSITKNVKETKAVGKYIRLSPHKVRRVLDQIRGRKYQEALIILEFMPYRVCSHIKQILESAAANAEHNDGLNKNQLFVSKAFADKGPTLKRFQPRAQGRAFPIHKPTCHITLGVSEL.

The protein belongs to the universal ribosomal protein uL22 family. As to quaternary structure, part of the 50S ribosomal subunit.

The protein resides in the plastid. It localises to the chloroplast. Its function is as follows. This protein binds specifically to 23S rRNA. The globular domain of the protein is located near the polypeptide exit tunnel on the outside of the subunit, while an extended beta-hairpin is found that lines the wall of the exit tunnel in the center of the 70S ribosome. The chain is Large ribosomal subunit protein uL22c (rpl22) from Pyropia yezoensis (Susabi-nori).